The following is a 730-amino-acid chain: Actin filament-associated protein 1 (730 aa).

Methionine 1 bears the N-acetylmethionine mark. The segment at 47–91 (KDHAQKQETANSLPAPPQMPLPEIPQPWLPPDSGPPPLPTSSLPE) is disordered. Over residues 60 to 85 (PAPPQMPLPEIPQPWLPPDSGPPPLP) the composition is skewed to pro residues. The SH3-binding motif lies at 71–74 (PQPW). Positions 94–97 (YEEA) match the SH2-binding 1 motif. A disordered region spans residues 119-140 (SSSYESYDEEEEDGKGKKTRHQ). Residues 153 to 249 (DAKICAFLLR…WLKVIKEAYS (97 aa)) enclose the PH 1 domain. Positions 252 to 292 (SGPVDSECPPPPSSPVHKAELEKKLSSERPSSDGEGVVENG) are disordered. Basic and acidic residues predominate over residues 268 to 283 (HKAELEKKLSSERPSS). Phosphoserine is present on residues serine 282 and serine 283. The PH 2 domain occupies 347-441 (DVPTCGYLNV…WIGILLAETG (95 aa)). The SH2-binding 2 signature appears at 451–456 (YDYIDV). A disordered region spans residues 512-537 (KGKKPPVASNGVTGKGKTLSSQPKKA). Serine 548 is subject to Phosphoserine. The stretch at 557-648 (KNRVEADAKR…VKESLKKALA (92 aa)) forms a coiled coil. The interval 594-637 (DLRAAIEVNAGRKPQAILEEKLKQLEEECRQKEAERVSLELELT) is interaction with F-actin. Residues serine 664, serine 665, and serine 668 each carry the phosphoserine modification. Residue threonine 675 is modified to Phosphothreonine. 2 positions are modified to phosphoserine: serine 679 and serine 687.

In terms of assembly, monomer and homomultimer. Interacts via its C-terminus with F-actin; probably involving AFAP1 multimers. Interacts with activated SRC SH3-SH2 domains. Interacts via its PH 1 domain with PRKCA, PRKCB and PRKCI. Phosphorylated on tyrosine residues by SRC. Low expression in normal breast epithelial cell line MCF-10A and in tumorigenic breast cancer cell lines MCF-7, T-47D and ZR-75-1. Highly expressed in the invasive breast cancer cell lines MDA-MB-231 and MDA-MB-435. Overexpressed in prostate carcinoma.

The protein localises to the cytoplasm. It is found in the cytoskeleton. It localises to the stress fiber. Can cross-link actin filaments into both network and bundle structures. May modulate changes in actin filament integrity and induce lamellipodia formation. May function as an adapter molecule that links other proteins, such as SRC and PKC to the actin cytoskeleton. Seems to play a role in the development and progression of prostate adenocarcinoma by regulating cell-matrix adhesions and migration in the cancer cells. In Homo sapiens (Human), this protein is Actin filament-associated protein 1 (AFAP1).